Here is a 380-residue protein sequence, read N- to C-terminus: Probable inorganic pyrophosphatase (380 aa).

Positions 198, 203, and 235 each coordinate Mg(2+).

This sequence belongs to the PPase family. Mg(2+) is required as a cofactor.

The catalysed reaction is diphosphate + H2O = 2 phosphate + H(+). This is Probable inorganic pyrophosphatase from Plasmodium falciparum (isolate 3D7).